We begin with the raw amino-acid sequence, 343 residues long: S-adenosylmethionine:tRNA ribosyltransferase-isomerase (343 aa).

The protein belongs to the QueA family. As to quaternary structure, monomer.

It is found in the cytoplasm. The catalysed reaction is 7-aminomethyl-7-carbaguanosine(34) in tRNA + S-adenosyl-L-methionine = epoxyqueuosine(34) in tRNA + adenine + L-methionine + 2 H(+). Its pathway is tRNA modification; tRNA-queuosine biosynthesis. Transfers and isomerizes the ribose moiety from AdoMet to the 7-aminomethyl group of 7-deazaguanine (preQ1-tRNA) to give epoxyqueuosine (oQ-tRNA). The polypeptide is S-adenosylmethionine:tRNA ribosyltransferase-isomerase (Dehalococcoides mccartyi (strain CBDB1)).